An 812-amino-acid chain; its full sequence is Phospholipase D alpha 2 (812 aa).

A propeptide spanning residues 1–36 (MAQHLLHGTLHATIYEVDALHTGGLRSAGFLGKIIS) is cleaved from the precursor. The C2 domain occupies 1 to 127 (MAQHLLHGTL…INGEEVEKWV (127 aa)). Positions 328-368 (AMFTHHQKIVVVDSEVPSQGGGSEMRRIMSFVGGIDLCDGR) constitute a PLD phosphodiesterase 1 domain. Residues histidine 333, lysine 335, and aspartate 340 contribute to the active site. A 1,2-diacyl-sn-glycero-3-phosphate is bound at residue histidine 333. Position 374 (histidine 374) interacts with Ca(2+). Residues glutamine 524 and histidine 663 each contribute to the a 1,2-diacyl-sn-glycero-3-phosphate site. The 28-residue stretch at 658 to 685 (FMIYVHSKMMIVDDEYIIVGSANINQRS) folds into the PLD phosphodiesterase 2 domain. Active-site residues include histidine 663, lysine 665, and aspartate 670. Glutamate 724 contributes to the Ca(2+) binding site.

The protein belongs to the phospholipase D family. C2-PLD subfamily. Ca(2+) is required as a cofactor.

The protein localises to the cytoplasm. Its subcellular location is the membrane. The enzyme catalyses a 1,2-diacyl-sn-glycero-3-phosphocholine + H2O = a 1,2-diacyl-sn-glycero-3-phosphate + choline + H(+). Functionally, hydrolyzes glycerol-phospholipids at the terminal phosphodiesteric bond. Plays an important role in various cellular processes, including phytohormone action, vesicular trafficking, secretion, cytoskeletal arrangement, meiosis, tumor promotion, pathogenesis, membrane deterioration and senescence. This is Phospholipase D alpha 2 (PLD2) from Brassica oleracea var. capitata (Cabbage).